The sequence spans 132 residues: D-ribose pyranase (132 aa).

His20 functions as the Proton donor in the catalytic mechanism. Residues Asp28, His99, and 121-123 (YSN) each bind substrate.

Belongs to the RbsD / FucU family. RbsD subfamily. As to quaternary structure, homodecamer.

It localises to the cytoplasm. The enzyme catalyses beta-D-ribopyranose = beta-D-ribofuranose. It participates in carbohydrate metabolism; D-ribose degradation; D-ribose 5-phosphate from beta-D-ribopyranose: step 1/2. Catalyzes the interconversion of beta-pyran and beta-furan forms of D-ribose. The sequence is that of D-ribose pyranase from Lactococcus lactis subsp. lactis (strain IL1403) (Streptococcus lactis).